Reading from the N-terminus, the 281-residue chain is Transcription factor bHLH79 (281 aa).

A disordered region spans residues 47 to 167 (FTRSEHSGNK…GQATDRHSLA (121 aa)). Composition is skewed to basic and acidic residues over residues 77–88 (KTRDLNSEDDSS) and 138–152 (TEQKNKPEPPKDYIH). The bHLH domain maps to 159 to 209 (QATDRHSLAERARREKISEKMTALQDIIPGCNKIIGKALVLDEIINYIQSL).

In terms of assembly, homodimer.

It is found in the nucleus. This chain is Transcription factor bHLH79 (BHLH79), found in Arabidopsis thaliana (Mouse-ear cress).